The primary structure comprises 597 residues: Putative diflavin flavoprotein A 3 (597 aa).

A zinc metallo-hydrolase region spans residues 59 to 254; sequence QRGTTANSYL…YPAQTYAPSH (196 aa). The Flavodoxin-like domain occupies 283-421; sequence VALIYASAYG…MCEEAGTDFA (139 aa). The tract at residues 449–597 is flavodoxin-reductase-like; the sequence is LGRLVGSLCV…VHHRKSGDHY (149 aa).

It in the N-terminal section; belongs to the zinc metallo-hydrolase group 3 family. In the C-terminal section; belongs to the flavodoxin reductase family. Fe cation serves as cofactor.

Functionally, mediates electron transfer from NADH to oxygen, reducing it to water. This modular protein has 3 redox cofactors, in other organisms the same activity requires 2 or 3 proteins. The sequence is that of Putative diflavin flavoprotein A 3 (dfa3) from Synechocystis sp. (strain ATCC 27184 / PCC 6803 / Kazusa).